The sequence spans 550 residues: Hydroxylamine reductase (550 aa).

[2Fe-2S] cluster-binding residues include cysteine 3, cysteine 6, cysteine 18, and cysteine 25. Hybrid [4Fe-2O-2S] cluster-binding residues include histidine 249, glutamate 273, cysteine 317, cysteine 405, cysteine 433, cysteine 458, glutamate 492, and lysine 494. At cysteine 405 the chain carries Cysteine persulfide.

Belongs to the HCP family. The cofactor is [2Fe-2S] cluster. Requires hybrid [4Fe-2O-2S] cluster as cofactor.

It is found in the cytoplasm. The catalysed reaction is A + NH4(+) + H2O = hydroxylamine + AH2 + H(+). Catalyzes the reduction of hydroxylamine to form NH(3) and H(2)O. The polypeptide is Hydroxylamine reductase (Salmonella gallinarum (strain 287/91 / NCTC 13346)).